A 591-amino-acid chain; its full sequence is V-type ATP synthase alpha chain (591 aa).

Position 233–240 (233–240) interacts with ATP; that stretch reads GPFGAGKT.

It belongs to the ATPase alpha/beta chains family.

The enzyme catalyses ATP + H2O + 4 H(+)(in) = ADP + phosphate + 5 H(+)(out). In terms of biological role, produces ATP from ADP in the presence of a proton gradient across the membrane. The V-type alpha chain is a catalytic subunit. This is V-type ATP synthase alpha chain from Streptococcus pneumoniae (strain ATCC 700669 / Spain 23F-1).